Here is a 62-residue protein sequence, read N- to C-terminus: Venom protein 51.1 (62 aa).

The N-terminal stretch at 1–25 (MKFFGILLIVTMVVLVMIATTYVES) is a signal peptide. Disulfide bonds link cysteine 32-cysteine 53, cysteine 39-cysteine 58, and cysteine 43-cysteine 60.

As to expression, expressed by the venom gland.

It localises to the secreted. In terms of biological role, neurotoxin. Decreases the action potential of myelinated nerves in mice and frogs. In Lychas mucronatus (Chinese swimming scorpion), this protein is Venom protein 51.1.